Here is a 415-residue protein sequence, read N- to C-terminus: Interleukin-5 receptor subunit alpha (415 aa).

A signal peptide spans 1 to 17 (MVPVLLILVGALATLQA). Over 18 to 339 (DLLNHKKFLL…KERKSLVEWH (322 aa)) the chain is Extracellular. The Fibronectin type-III 1 domain occupies 29–120 (PPVNFTIKAT…VSAELKAPPG (92 aa)). 2 N-linked (GlcNAc...) asparagine glycosylation sites follow: N32 and N128. Intrachain disulfides connect C131–C152 and C179–C193. 2 N-linked (GlcNAc...) asparagine glycosylation sites follow: N213 and N241. Residues 238 to 331 (PPRNVTVEIE…WSQPIYVGKE (94 aa)) form the Fibronectin type-III 2 domain. An intrachain disulfide couples C266 to C313. Positions 319–323 (WGEWS) match the WSXWS motif motif. The helical transmembrane segment at 340 to 361 (LIVLPTAACFVLLIFSLICRVC) threads the bilayer. Over 362-415 (HLWTRLFPPVPAPKSNIKDLPVVTEYEKPSNETKIEVVHCVEEVGFEVMGNSTF) the chain is Cytoplasmic. The short motif at 367–375 (LFPPVPAPK) is the Box 1 motif element.

Interacts with IL5. Interacts with CSF2RB. Interacts with JAK2. Interacts with SDCBP. As to expression, expressed on eosinophils and basophils. Also on B-cells.

Its subcellular location is the membrane. In terms of biological role, cell surface receptor that plays an important role in the survival, differentiation, and chemotaxis of eosinophils. Acts by forming a heterodimeric receptor with CSF2RB subunit and subsequently binding to interleukin-5. In unstimulated conditions, interacts constitutively with JAK2. Heterodimeric receptor activation leads to JAK2 stimulation and subsequent activation of the JAK-STAT pathway. This Mus musculus (Mouse) protein is Interleukin-5 receptor subunit alpha (Il5ra).